The sequence spans 126 residues: Large ribosomal subunit protein bL17 (126 aa).

Belongs to the bacterial ribosomal protein bL17 family. As to quaternary structure, part of the 50S ribosomal subunit. Contacts protein L32.

The protein is Large ribosomal subunit protein bL17 of Magnetococcus marinus (strain ATCC BAA-1437 / JCM 17883 / MC-1).